We begin with the raw amino-acid sequence, 770 residues long: Cyclopiane-type diterpene synthase (770 aa).

Residues isoleucine 5–asparagine 335 form a terpene cyclase region. Aspartate 97 and aspartate 101 together coordinate Mg(2+). Substrate contacts are provided by residues aspartate 97, aspartate 101, arginine 190 to aspartate 193, asparagine 234, serine 238 to glutamate 242, and arginine 328 to tyrosine 329. A DDXXD 1 motif is present at residues aspartate 97–aspartate 101. The short motif at asparagine 234 to glutamate 242 is the NSE/DTE element. Residues proline 336–leucine 720 form a prenyltransferase region. The interval asparagine 371–threonine 397 is disordered. A compositionally biased stretch (polar residues) spans lysine 374 to threonine 383. Isopentenyl diphosphate contacts are provided by lysine 423, arginine 426, and histidine 455. Residues aspartate 462 and aspartate 466 each coordinate Mg(2+). The DDXXD 2 motif lies at aspartate 462–aspartate 466. Arginine 471 is a dimethylallyl diphosphate binding site. Arginine 472 lines the isopentenyl diphosphate pocket. Lysine 548, threonine 549, glutamine 584, asparagine 591, lysine 620, and lysine 630 together coordinate dimethylallyl diphosphate.

This sequence in the N-terminal section; belongs to the terpene synthase family. The protein in the C-terminal section; belongs to the FPP/GGPP synthase family. As to quaternary structure, hexamer. Mg(2+) serves as cofactor.

The enzyme catalyses isopentenyl diphosphate + (2E,6E)-farnesyl diphosphate = (2E,6E,10E)-geranylgeranyl diphosphate + diphosphate. It catalyses the reaction (2E,6E,10E)-geranylgeranyl diphosphate + H2O = (+)-penichrysol + diphosphate. It participates in secondary metabolite biosynthesis; terpenoid biosynthesis. Functionally, bifunctional terpene synthase converts dimethylallyl diphosphate (DMAPP) and isopentenyl diphosphate (IPP) into a cyclopiane-type diterpene. The C-terminal prenyltransferase (PT) domain of PcCS catalyzes formation of geranylgeranyl pyrophosphate (GGPP), whereas the N-terminal terpene cyclase (TC) domain catalyzes the cyclization of GGPP to the cyclopiane-type diterpene penichrysol. This Penicillium chrysogenum (Penicillium notatum) protein is Cyclopiane-type diterpene synthase.